The primary structure comprises 476 residues: Riboflavin transporter rft-2 (476 aa).

A helical transmembrane segment spans residues 1–21 (MGCSAATFILVALFGSSSWMG). The Cytoplasmic segment spans residues 22–41 (TNSVWMQLPLLTSELPEQWN). A helical transmembrane segment spans residues 42-62 (LPSYLAGVVQIACIVPLIYTI). The Extracellular portion of the chain corresponds to 63–75 (LHKGVKSFTIPTA). The helical transmembrane segment at 76–96 (PLIIALLSLACCCQLGLSFFW) threads the bilayer. Residues 97 to 113 (SDYSEIFGAPRSWPLYS) lie on the Cytoplasmic side of the membrane. Residues 114 to 134 (LLFGLAIVNAMSNVLFMPFMA) traverse the membrane as a helical segment. At 135-140 (QFHPAY) the chain is on the extracellular side. A helical membrane pass occupies residues 141 to 161 (LNAYFVGMGLSSLAPSLLSLA). At 162 to 185 (QGTSMFKCDEKGVAERFPPNFSVS) the chain is on the cytoplasmic side. The chain crosses the membrane as a helical span at residues 186-206 (IFFFVIFSFTCVALFAFIALY). The Extracellular segment spans residues 207-306 (RSGAHTHFAT…HPVDYITGVK (100 aa)). The segment at 215–249 (ATPNKKEPNEGTPLKKDLNNTSSSRKGDDEDESPI) is disordered. Over residues 218–232 (NKKEPNEGTPLKKDL) the composition is skewed to basic and acidic residues. N233 carries an N-linked (GlcNAc...) asparagine glycan. The chain crosses the membrane as a helical span at residues 307–327 (FTFLLFTTALVNAQMNGIITS). At 328-342 (VQSYAALPYSQATYH) the chain is on the cytoplasmic side. Residues 343 to 363 (FAVTLSNVVSPLSSFLPFFIS) traverse the membrane as a helical segment. Over 364–366 (VRS) the chain is Extracellular. A helical membrane pass occupies residues 367–387 (IPVLAILTACSTAMTAFIVYL). At 388–393 (AALSPN) the chain is on the cytoplasmic side. The helical transmembrane segment at 394 to 414 (LIFNSVTIGSALSIGGSLIAA) threads the bilayer. At 415-437 (GLHSYLRVVFASLLREGHQSESR) the chain is on the extracellular side. A helical membrane pass occupies residues 438 to 458 (LFWCGVFIQIGSFIGSAVMFP). Over 459–476 (LVNIAHLFTSAPQCKSIS) the chain is Cytoplasmic.

Belongs to the riboflavin transporter family. In terms of tissue distribution, expressed in intestine and pharynx.

The protein localises to the cell membrane. The enzyme catalyses riboflavin(in) = riboflavin(out). Riboflavin transporter. The chain is Riboflavin transporter rft-2 from Caenorhabditis elegans.